We begin with the raw amino-acid sequence, 240 residues long: uncharacterized protein (240 aa).

At M1–T85 the chain is on the cytoplasmic side. Residues I86 to V106 traverse the membrane as a helical segment. At H107–N131 the chain is on the extracellular side. A helical membrane pass occupies residues I132–H152. At A153 to R240 the chain is on the cytoplasmic side. Residues Q181–R240 are disordered. A compositionally biased stretch (low complexity) spans V197 to N210.

It is found in the membrane. This is an uncharacterized protein from Saccharomyces cerevisiae (strain ATCC 204508 / S288c) (Baker's yeast).